The chain runs to 322 residues: tRNA N6-adenosine threonylcarbamoyltransferase (322 aa).

2 residues coordinate Fe cation: H109 and H113. Substrate is bound by residues 131–135 (LISGG), D164, G177, D181, and N277. A Fe cation-binding site is contributed by D303.

It belongs to the KAE1 / TsaD family. Requires Fe(2+) as cofactor.

It is found in the cytoplasm. It catalyses the reaction L-threonylcarbamoyladenylate + adenosine(37) in tRNA = N(6)-L-threonylcarbamoyladenosine(37) in tRNA + AMP + H(+). In terms of biological role, required for the formation of a threonylcarbamoyl group on adenosine at position 37 (t(6)A37) in tRNAs that read codons beginning with adenine. Is involved in the transfer of the threonylcarbamoyl moiety of threonylcarbamoyl-AMP (TC-AMP) to the N6 group of A37, together with TsaE and TsaB. TsaD likely plays a direct catalytic role in this reaction. This chain is tRNA N6-adenosine threonylcarbamoyltransferase, found in Mesomycoplasma hyopneumoniae (strain 232) (Mycoplasma hyopneumoniae).